Consider the following 233-residue polypeptide: 5'-methylthioadenosine/S-adenosylhomocysteine nucleosidase (233 aa).

Residue Glu12 is the Proton acceptor of the active site. Substrate contacts are provided by residues Gly78, Ile153, and 174 to 175 (ME). Asp198 functions as the Proton donor in the catalytic mechanism.

This sequence belongs to the PNP/UDP phosphorylase family. MtnN subfamily.

The catalysed reaction is S-adenosyl-L-homocysteine + H2O = S-(5-deoxy-D-ribos-5-yl)-L-homocysteine + adenine. It catalyses the reaction S-methyl-5'-thioadenosine + H2O = 5-(methylsulfanyl)-D-ribose + adenine. The enzyme catalyses 5'-deoxyadenosine + H2O = 5-deoxy-D-ribose + adenine. The protein operates within amino-acid biosynthesis; L-methionine biosynthesis via salvage pathway; S-methyl-5-thio-alpha-D-ribose 1-phosphate from S-methyl-5'-thioadenosine (hydrolase route): step 1/2. Its function is as follows. Catalyzes the irreversible cleavage of the glycosidic bond in both 5'-methylthioadenosine (MTA) and S-adenosylhomocysteine (SAH/AdoHcy) to adenine and the corresponding thioribose, 5'-methylthioribose and S-ribosylhomocysteine, respectively. Also cleaves 5'-deoxyadenosine, a toxic by-product of radical S-adenosylmethionine (SAM) enzymes, into 5-deoxyribose and adenine. This Exiguobacterium sp. (strain ATCC BAA-1283 / AT1b) protein is 5'-methylthioadenosine/S-adenosylhomocysteine nucleosidase.